The sequence spans 238 residues: Ribonuclease-like storage protein (238 aa).

Positions 1 to 23 are cleaved as a signal peptide; sequence MRAIYIISVIIVSLSIFSWGGNA. Glutamine 37 is a binding site for RNA. The cysteines at positions 43 and 49 are disulfide-linked. Residues histidine 61, phenylalanine 109, 112 to 113, and 116 to 117 contribute to the RNA site; these read HE and KH. The active-site Proton donor is histidine 61. Intrachain disulfides connect cysteine 76–cysteine 120 and cysteine 196–cysteine 207. Glutamate 113 is an active-site residue. Histidine 117 acts as the Proton acceptor in catalysis.

This sequence belongs to the RNase T2 family. Homodimer. In terms of tissue distribution, root.

In terms of biological role, may act as a storage protein providing a nitrogen source. Seems to have no RNase activity although it has conserved the active site residues. This is Ribonuclease-like storage protein from Panax ginseng (Korean ginseng).